The following is a 370-amino-acid chain: Aminomethyltransferase (370 aa).

This sequence belongs to the GcvT family. The glycine cleavage system is composed of four proteins: P, T, L and H.

The enzyme catalyses N(6)-[(R)-S(8)-aminomethyldihydrolipoyl]-L-lysyl-[protein] + (6S)-5,6,7,8-tetrahydrofolate = N(6)-[(R)-dihydrolipoyl]-L-lysyl-[protein] + (6R)-5,10-methylene-5,6,7,8-tetrahydrofolate + NH4(+). Its function is as follows. The glycine cleavage system catalyzes the degradation of glycine. This Prochlorococcus marinus (strain MIT 9215) protein is Aminomethyltransferase.